A 373-amino-acid polypeptide reads, in one-letter code: D-amino-acid transaminase, chloroplastic (373 aa).

A chloroplast-targeting transit peptide spans 1–57 (MAGLSLEFTVNTWNLRSLSQVPCPLRHGFRFPRRLTRRRTILMCSDSSSQSWNVPVL). Residue arginine 128 participates in pyridoxal 5'-phosphate binding. The Proton acceptor role is filled by lysine 222. Lysine 222 is subject to N6-(pyridoxal phosphate)lysine. Glutamate 255 contributes to the pyridoxal 5'-phosphate binding site.

This sequence belongs to the class-IV pyridoxal-phosphate-dependent aminotransferase family. As to quaternary structure, homodimer. It depends on pyridoxal 5'-phosphate as a cofactor.

It is found in the plastid. The protein localises to the chloroplast. It carries out the reaction D-alanine + 2-oxoglutarate = D-glutamate + pyruvate. The enzyme catalyses 4-amino-4-deoxychorismate = 4-aminobenzoate + pyruvate + H(+). Its pathway is cofactor biosynthesis; tetrahydrofolate biosynthesis; 4-aminobenzoate from chorismate: step 2/2. Inhibited by hydroxylamine or amino-oxyacetic acid. Its function is as follows. Amino acid aminotransferase showing activity for D-Asp and D-Ala as amino donors with 2-oxoglutarate as an amino acceptor. Can also use D-Met, D-Tyr, D-Phe, D-Gln, D-Trp and D-Asn as substrates, but no activity with L-Asp, L-Ala, L-Leu, L-Ile or L-Val. Also catalyzes the reverse reaction where an amino group is transferred from D-Glu to pyruvate or oxaloacetate to produce D-Ala or D-Asp, respectively. Also involved in folate biosynthesis, acting as an aminodeoxychorismate lyase converting 4-amino-4-deoxychorismate (ADC) to p-aminobenzoate (PABA). The protein is D-amino-acid transaminase, chloroplastic of Arabidopsis thaliana (Mouse-ear cress).